Here is a 380-residue protein sequence, read N- to C-terminus: Cytochrome b (380 aa).

A run of 4 helical transmembrane segments spans residues 34–54 (FGSLLGICLATQILTGLLLAA), 78–99 (WLIRNLHANGASFFFICIYLHI), 114–134 (WNTGVILLLTLMATAFVGYVL), and 179–199 (FFTLHFLLPFMIMGLTLIHLT). Heme b-binding residues include histidine 84 and histidine 98. Positions 183 and 197 each coordinate heme b. Histidine 202 provides a ligand contact to a ubiquinone. A run of 4 helical transmembrane segments spans residues 227-247 (LKDILGFMLMLLPLMTLALFS), 289-309 (LGGVLALAASVLILFLAPLLH), 321-341 (LSQLLFWTLTANLLILTWVGS), and 348-368 (FMIIGQLASLTYFTILLVLFP).

This sequence belongs to the cytochrome b family. The cytochrome bc1 complex contains 11 subunits: 3 respiratory subunits (MT-CYB, CYC1 and UQCRFS1), 2 core proteins (UQCRC1 and UQCRC2) and 6 low-molecular weight proteins (UQCRH/QCR6, UQCRB/QCR7, UQCRQ/QCR8, UQCR10/QCR9, UQCR11/QCR10 and a cleavage product of UQCRFS1). This cytochrome bc1 complex then forms a dimer. It depends on heme b as a cofactor.

Its subcellular location is the mitochondrion inner membrane. In terms of biological role, component of the ubiquinol-cytochrome c reductase complex (complex III or cytochrome b-c1 complex) that is part of the mitochondrial respiratory chain. The b-c1 complex mediates electron transfer from ubiquinol to cytochrome c. Contributes to the generation of a proton gradient across the mitochondrial membrane that is then used for ATP synthesis. The protein is Cytochrome b (MT-CYB) of Anthropoides virgo (Demoiselle crane).